A 191-amino-acid polypeptide reads, in one-letter code: Peptidyl-tRNA hydrolase (191 aa).

Residue Tyr14 participates in tRNA binding. His19 (proton acceptor) is an active-site residue. Tyr65, Asn67, and Asn113 together coordinate tRNA.

The protein belongs to the PTH family. In terms of assembly, monomer.

It is found in the cytoplasm. The catalysed reaction is an N-acyl-L-alpha-aminoacyl-tRNA + H2O = an N-acyl-L-amino acid + a tRNA + H(+). Its function is as follows. Hydrolyzes ribosome-free peptidyl-tRNAs (with 1 or more amino acids incorporated), which drop off the ribosome during protein synthesis, or as a result of ribosome stalling. Functionally, catalyzes the release of premature peptidyl moieties from peptidyl-tRNA molecules trapped in stalled 50S ribosomal subunits, and thus maintains levels of free tRNAs and 50S ribosomes. The sequence is that of Peptidyl-tRNA hydrolase from Nitrosospira multiformis (strain ATCC 25196 / NCIMB 11849 / C 71).